The primary structure comprises 228 residues: Urease accessory protein UreF (228 aa).

It belongs to the UreF family. In terms of assembly, ureD, UreF and UreG form a complex that acts as a GTP-hydrolysis-dependent molecular chaperone, activating the urease apoprotein by helping to assemble the nickel containing metallocenter of UreC. The UreE protein probably delivers the nickel.

The protein resides in the cytoplasm. Required for maturation of urease via the functional incorporation of the urease nickel metallocenter. The chain is Urease accessory protein UreF from Yersinia pseudotuberculosis serotype IB (strain PB1/+).